The primary structure comprises 336 residues: SCP domain-containing protein 1 (336 aa).

Residues 1–18 (MEFKLLLVLCFNIGLICS) form the signal peptide. Asparagine 47 is a glycosylation site (N-linked (GlcNAc...) asparagine). Over residues 73 to 85 (QGGNTAPSSSLPG) the composition is skewed to polar residues. The disordered stretch occupies residues 73-94 (QGGNTAPSSSLPGVSSMPMPSA). The 118-residue stretch at 175–292 (LEEHNKFRSD…YCGDMSFIAC (118 aa)) folds into the SCP domain. N-linked (GlcNAc...) asparagine glycosylation is found at asparagine 213 and asparagine 257.

As to expression, component of the acid-insoluble and acid-soluble organic matrix of calcified layers of the shell (at protein level).

It localises to the secreted. This Lottia gigantea (Giant owl limpet) protein is SCP domain-containing protein 1.